A 693-amino-acid chain; its full sequence is E3 ubiquitin-protein ligase MARCHF7 (693 aa).

M1 is modified (N-acetylmethionine). Disordered stretches follow at residues 1–43 (MESK…RDSS), 69–136 (ESEI…LGSF), 158–281 (LMDY…RRTT), 296–342 (FFSR…EGRA), 361–430 (LSQN…RDSN), 445–475 (AANRPQASGASSSAAAGGSTPELPQGGRNPG), and 512–533 (WNSTDGKNDKAKSAPSRDPEKL). Polar residues-rich tracts occupy residues 14-36 (VQPSGSLSTRMVSGNRGTSLNDS), 95-105 (SCTNCASTSAG), 112-132 (LNTVSDSSWRHSQVPRSSSMV), 167-184 (DFTTSSYVQERVPSSYSQ), and 192-215 (AVSTLQLNSSSTNHQLPSDHQTVP). The span at 216–234 (SSRDSSRSSFRSHFSPRQS) shows a compositional bias: low complexity. Polar residues predominate over residues 236–267 (SFRNSSHPAFSYFSSRNETPTISNSERGSSQR). The span at 268-279 (PYRESSDNEGRR) shows a compositional bias: basic and acidic residues. The span at 296-305 (FFSRRSSQDS) shows a compositional bias: low complexity. Over residues 306 to 323 (LNTRSLSSENYISPRTLT) the composition is skewed to polar residues. S318 carries the post-translational modification Phosphoserine. The segment covering 324-337 (SQSRNNGTSSSSDV) has biased composition (low complexity). S390 bears the Phosphoserine mark. Residues 451–463 (ASGASSSAAAGGS) are compositionally biased toward low complexity. Positions 517–533 (GKNDKAKSAPSRDPEKL) are enriched in basic and acidic residues. An RING-CH-type zinc finger spans residues 546 to 616 (DDEEEGDLCR…ELCKEKLQLN (71 aa)). 8 residues coordinate Zn(2+): C554, C557, C572, C574, H582, C585, C606, and C609. Phosphothreonine is present on T688. Phosphoserine is present on S689.

Expressed in brain, thymus, muscle and kidney.

It localises to the cytoplasm. It catalyses the reaction S-ubiquitinyl-[E2 ubiquitin-conjugating enzyme]-L-cysteine + [acceptor protein]-L-lysine = [E2 ubiquitin-conjugating enzyme]-L-cysteine + N(6)-ubiquitinyl-[acceptor protein]-L-lysine.. Its pathway is protein modification; protein ubiquitination. Its function is as follows. E3 ubiquitin-protein ligase which may specifically enhance the E2 activity of HIP2. E3 ubiquitin ligases accept ubiquitin from an E2 ubiquitin-conjugating enzyme in the form of a thioester and then directly transfer the ubiquitin to targeted substrates. May be involved in T-cell proliferation by regulating LIF secretion. May play a role in lysosome homeostasis. Promotes 'Lys-6', 'Lys-11' and 'Lys-63'-linked mixed polyubiquitination on ATG14 leading to the inhibition of autophagy by impairing the interaction between ATG14 and STX7. Participates in the dopamine-mediated negative regulation of the NLRP3 inflammasome by promoting its uibiquitination and subsequent degradation. The polypeptide is E3 ubiquitin-protein ligase MARCHF7 (Marchf7) (Mus musculus (Mouse)).